The chain runs to 170 residues: UPF0260 protein RPC_1790 (170 aa).

This sequence belongs to the UPF0260 family.

This is UPF0260 protein RPC_1790 from Rhodopseudomonas palustris (strain BisB18).